Here is a 235-residue protein sequence, read N- to C-terminus: Small ribosomal subunit protein eS4 (235 aa).

In terms of domain architecture, S4 RNA-binding spans 43–114 (IPLLLIVRDM…DPHRFLRLIE (72 aa)).

The protein belongs to the eukaryotic ribosomal protein eS4 family.

The polypeptide is Small ribosomal subunit protein eS4 (Korarchaeum cryptofilum (strain OPF8)).